The chain runs to 393 residues: Acetylornithine aminotransferase (393 aa).

Residues 95–96 (GA) and F127 each bind pyridoxal 5'-phosphate. R130 lines the N(2)-acetyl-L-ornithine pocket. Residue 214–217 (DEVQ) participates in pyridoxal 5'-phosphate binding. K243 bears the N6-(pyridoxal phosphate)lysine mark. S271 provides a ligand contact to N(2)-acetyl-L-ornithine. T272 serves as a coordination point for pyridoxal 5'-phosphate.

It belongs to the class-III pyridoxal-phosphate-dependent aminotransferase family. ArgD subfamily. As to quaternary structure, homodimer. Pyridoxal 5'-phosphate is required as a cofactor.

It localises to the cytoplasm. It carries out the reaction N(2)-acetyl-L-ornithine + 2-oxoglutarate = N-acetyl-L-glutamate 5-semialdehyde + L-glutamate. It functions in the pathway amino-acid biosynthesis; L-arginine biosynthesis; N(2)-acetyl-L-ornithine from L-glutamate: step 4/4. The sequence is that of Acetylornithine aminotransferase from Nitrosomonas europaea (strain ATCC 19718 / CIP 103999 / KCTC 2705 / NBRC 14298).